The chain runs to 436 residues: Flagellum-specific ATP synthase (436 aa).

Ser-165 to Ser-172 lines the ATP pocket.

Belongs to the ATPase alpha/beta chains family.

It is found in the cytoplasm. It carries out the reaction ATP + H2O + 4 H(+)(in) = ADP + phosphate + 5 H(+)(out). In terms of biological role, probable catalytic subunit of a protein translocase for flagellum-specific export, or a proton translocase involved in local circuits at the flagellum. May be involved in a specialized protein export pathway that proceeds without signal peptide cleavage. This is Flagellum-specific ATP synthase (fliI) from Borreliella burgdorferi (strain ATCC 35210 / DSM 4680 / CIP 102532 / B31) (Borrelia burgdorferi).